The chain runs to 92 residues: Conotoxin Cal22f (92 aa).

A signal peptide spans 1–24 (MMSTKGITLFLCLLLLALATSVNG). Positions 25-44 (GQGTRRSRMTRALHGGRPSA) are excised as a propeptide.

In terms of processing, contains 4 disulfide bonds. Expressed by the venom duct.

It localises to the secreted. Functionally, probable neurotoxin with unknown target. Possibly targets ion channels. The polypeptide is Conotoxin Cal22f (Californiconus californicus (California cone)).